The primary structure comprises 109 residues: Aquaporin-2 (109 aa).

The Cytoplasmic portion of the chain corresponds to Ser-1–Arg-6. Residues Ala-7–Leu-27 traverse the membrane as a helical segment. Residues Asn-28–Ser-35 lie on the Extracellular side of the membrane. The helical transmembrane segment at Val-36 to Leu-54 threads the bilayer. The Cytoplasmic portion of the chain corresponds to Gly-55–Gly-59. Positions Ala-60 to Ala-69 form an intramembrane region, discontinuously helical. Positions Asn-63 to Ala-65 match the NPA 1 motif. Over Cys-70–Arg-80 the chain is Cytoplasmic. A helical membrane pass occupies residues Ala-81 to Ile-102. Residues Thr-103–Gly-109 are Extracellular-facing.

The protein belongs to the MIP/aquaporin (TC 1.A.8) family. In terms of assembly, homotetramer. In terms of processing, serine phosphorylation is necessary and sufficient for expression at the apical membrane. Endocytosis is not phosphorylation-dependent. N-glycosylated.

It is found in the apical cell membrane. The protein resides in the basolateral cell membrane. It localises to the cell membrane. The protein localises to the cytoplasmic vesicle membrane. Its subcellular location is the golgi apparatus. It is found in the trans-Golgi network membrane. The enzyme catalyses H2O(in) = H2O(out). The catalysed reaction is glycerol(in) = glycerol(out). In terms of biological role, forms a water-specific channel that provides the plasma membranes of renal collecting duct with high permeability to water, thereby permitting water to move in the direction of an osmotic gradient. Plays an essential role in renal water homeostasis. Could also be permeable to glycerol. This Dugong dugon (Dugong) protein is Aquaporin-2.